Here is a 61-residue protein sequence, read N- to C-terminus: MAKKALVNKANKKPKFAVRAYTRCQRCGRPHSVFRKFGLCRICVREMAHAGELPGVHKSSW.

Cys24, Cys27, Cys40, and Cys43 together coordinate Zn(2+).

Belongs to the universal ribosomal protein uS14 family. Zinc-binding uS14 subfamily. Part of the 30S ribosomal subunit. Contacts proteins S3 and S10. The cofactor is Zn(2+).

Its function is as follows. Binds 16S rRNA, required for the assembly of 30S particles and may also be responsible for determining the conformation of the 16S rRNA at the A site. This Rhodococcus jostii (strain RHA1) protein is Small ribosomal subunit protein uS14B.